The following is a 265-amino-acid chain: Arcelin-1 (265 aa).

A signal peptide spans 1-21 (MASSNLLTLALFLVLLTHANS). N-linked (GlcNAc...) asparagine glycosylation is found at asparagine 33, asparagine 89, and asparagine 128. Cysteine 165 and cysteine 201 are joined by a disulfide.

This sequence belongs to the leguminous lectin family. In terms of assembly, homodimer.

In terms of biological role, seed storage. This carbohydrate-binding lectin has toxic effects on an important bean bruchid pest, Z.subfasciatus. Antibiosis properties of legume lectins are proposed to be due to the lysis of epithelial cells of the intestine by binding to the carbohydrate moieties of these proteins. This is Arcelin-1 (ARC1) from Phaseolus vulgaris (Kidney bean).